A 353-amino-acid chain; its full sequence is Nicotinate-nucleotide--dimethylbenzimidazole phosphoribosyltransferase (353 aa).

The active-site Proton acceptor is the Glu318.

Belongs to the CobT family.

It carries out the reaction 5,6-dimethylbenzimidazole + nicotinate beta-D-ribonucleotide = alpha-ribazole 5'-phosphate + nicotinate + H(+). It participates in nucleoside biosynthesis; alpha-ribazole biosynthesis; alpha-ribazole from 5,6-dimethylbenzimidazole: step 1/2. In terms of biological role, catalyzes the synthesis of alpha-ribazole-5'-phosphate from nicotinate mononucleotide (NAMN) and 5,6-dimethylbenzimidazole (DMB). The protein is Nicotinate-nucleotide--dimethylbenzimidazole phosphoribosyltransferase of Geobacter metallireducens (strain ATCC 53774 / DSM 7210 / GS-15).